We begin with the raw amino-acid sequence, 449 residues long: Signal recognition particle protein (449 aa).

GTP-binding positions include Gly-109–Thr-116, Asp-191–Arg-195, and Ser-249–Asp-252.

Belongs to the GTP-binding SRP family. SRP54 subfamily. Part of the signal recognition particle protein translocation system, which is composed of SRP and FtsY. SRP is a ribonucleoprotein composed of Ffh and a 4.5S RNA molecule.

It localises to the cytoplasm. It carries out the reaction GTP + H2O = GDP + phosphate + H(+). Involved in targeting and insertion of nascent membrane proteins into the cytoplasmic membrane. Binds to the hydrophobic signal sequence of the ribosome-nascent chain (RNC) as it emerges from the ribosomes. The SRP-RNC complex is then targeted to the cytoplasmic membrane where it interacts with the SRP receptor FtsY. Interaction with FtsY leads to the transfer of the RNC complex to the Sec translocase for insertion into the membrane, the hydrolysis of GTP by both Ffh and FtsY, and the dissociation of the SRP-FtsY complex into the individual components. The polypeptide is Signal recognition particle protein (Rickettsia bellii (strain RML369-C)).